Here is a 242-residue protein sequence, read N- to C-terminus: 1-(5-phosphoribosyl)-5-[(5-phosphoribosylamino)methylideneamino] imidazole-4-carboxamide isomerase (242 aa).

The Proton acceptor role is filled by D8. Catalysis depends on D129, which acts as the Proton donor.

The protein belongs to the HisA/HisF family.

Its subcellular location is the cytoplasm. It catalyses the reaction 1-(5-phospho-beta-D-ribosyl)-5-[(5-phospho-beta-D-ribosylamino)methylideneamino]imidazole-4-carboxamide = 5-[(5-phospho-1-deoxy-D-ribulos-1-ylimino)methylamino]-1-(5-phospho-beta-D-ribosyl)imidazole-4-carboxamide. It functions in the pathway amino-acid biosynthesis; L-histidine biosynthesis; L-histidine from 5-phospho-alpha-D-ribose 1-diphosphate: step 4/9. This is 1-(5-phosphoribosyl)-5-[(5-phosphoribosylamino)methylideneamino] imidazole-4-carboxamide isomerase from Erythrobacter litoralis (strain HTCC2594).